The chain runs to 99 residues: HssA/B-like protein 41 (99 aa).

Residues 1-29 (MTLFSSISSISNPMTSSKSSISSFGSGTS) form a disordered region.

The protein belongs to the hssA/B family.

This Dictyostelium discoideum (Social amoeba) protein is HssA/B-like protein 41 (hssl41).